A 228-amino-acid polypeptide reads, in one-letter code: Probable septum site-determining protein MinC (228 aa).

Belongs to the MinC family. Interacts with MinD and FtsZ.

In terms of biological role, cell division inhibitor that blocks the formation of polar Z ring septums. Rapidly oscillates between the poles of the cell to destabilize FtsZ filaments that have formed before they mature into polar Z rings. Prevents FtsZ polymerization. The protein is Probable septum site-determining protein MinC of Yersinia pseudotuberculosis serotype O:1b (strain IP 31758).